A 368-amino-acid chain; its full sequence is Flap endonuclease 1 (368 aa).

The N-domain stretch occupies residues 1–104 (MGIHDLSKVI…GELLKRGARR (104 aa)). Asp-34 is a binding site for Mg(2+). Arg-47 and Arg-70 together coordinate DNA. Asp-86 is a binding site for Mg(2+). The segment at 103–123 (RRKEAQANLEEATEQGDTEQM) is disordered. The segment at 122–251 (QMEKFSRRLV…QKAYQLIKEH (130 aa)) is I-domain. Mg(2+) contacts are provided by Glu-158, Glu-160, Asp-179, and Asp-181. Residue Glu-158 participates in DNA binding. Residues Gly-229 and Asp-231 each coordinate DNA. Asp-231 contributes to the Mg(2+) binding site. Positions 334-342 (QQGRLDSFF) are interaction with PCNA.

This sequence belongs to the XPG/RAD2 endonuclease family. FEN1 subfamily. In terms of assembly, interacts with PCNA. Three molecules of FEN1 bind to one PCNA trimer with each molecule binding to one PCNA monomer. PCNA stimulates the nuclease activity without altering cleavage specificity. Mg(2+) is required as a cofactor. In terms of processing, phosphorylated. Phosphorylation upon DNA damage induces relocalization to the nuclear plasma.

The protein localises to the nucleus. It localises to the nucleolus. The protein resides in the nucleoplasm. It is found in the mitochondrion. Structure-specific nuclease with 5'-flap endonuclease and 5'-3' exonuclease activities involved in DNA replication and repair. During DNA replication, cleaves the 5'-overhanging flap structure that is generated by displacement synthesis when DNA polymerase encounters the 5'-end of a downstream Okazaki fragment. It enters the flap from the 5'-end and then tracks to cleave the flap base, leaving a nick for ligation. Also involved in the long patch base excision repair (LP-BER) pathway, by cleaving within the apurinic/apyrimidinic (AP) site-terminated flap. Acts as a genome stabilization factor that prevents flaps from equilibrating into structures that lead to duplications and deletions. Also possesses 5'-3' exonuclease activity on nicked or gapped double-stranded DNA, and exhibits RNase H activity. Also involved in replication and repair of rDNA and in repairing mitochondrial DNA. The chain is Flap endonuclease 1 from Monosiga brevicollis (Choanoflagellate).